The following is a 508-amino-acid chain: Photosystem II CP47 reaction center protein (508 aa).

Transmembrane regions (helical) follow at residues 21 to 36 (AVHIMHTALVAGWAGS), 101 to 115 (IVFSGLCFLAAIWHW), 140 to 156 (GIHLFLSGVACFGFGAF), 203 to 218 (IAAGTLGILAGLFHLS), 237 to 252 (VLSSSIAAVFFAAFVV), and 457 to 472 (SFALLFFFGHIWHGAR).

Belongs to the PsbB/PsbC family. PsbB subfamily. PSII is composed of 1 copy each of membrane proteins PsbA, PsbB, PsbC, PsbD, PsbE, PsbF, PsbH, PsbI, PsbJ, PsbK, PsbL, PsbM, PsbT, PsbX, PsbY, PsbZ, Psb30/Ycf12, at least 3 peripheral proteins of the oxygen-evolving complex and a large number of cofactors. It forms dimeric complexes. Interacts with PAM68. Interacts with HHL1. It depends on Binds multiple chlorophylls. PSII binds additional chlorophylls, carotenoids and specific lipids. as a cofactor.

The protein localises to the plastid. It localises to the chloroplast thylakoid membrane. In terms of biological role, one of the components of the core complex of photosystem II (PSII). It binds chlorophyll and helps catalyze the primary light-induced photochemical processes of PSII. PSII is a light-driven water:plastoquinone oxidoreductase, using light energy to abstract electrons from H(2)O, generating O(2) and a proton gradient subsequently used for ATP formation. The polypeptide is Photosystem II CP47 reaction center protein (Arabidopsis thaliana (Mouse-ear cress)).